The chain runs to 221 residues: Penicillin-binding protein activator LpoB (221 aa).

The first 20 residues, 1 to 20 (MLNRMYRYALLATVALALSG), serve as a signal peptide directing secretion. Residue Cys21 is the site of N-palmitoyl cysteine attachment. The S-diacylglycerol cysteine moiety is linked to residue Cys21. Positions 29 to 82 (PAPVEEAQPGTQQPTQPVPPPTQPVPTVPSVPSIPAQPGPIEHQPENATPEPKA) are disordered. A compositionally biased stretch (pro residues) spans 44–57 (QPVPPPTQPVPTVP).

Belongs to the LpoB family. As to quaternary structure, interacts with PBP1b.

It localises to the cell outer membrane. Functionally, regulator of peptidoglycan synthesis that is essential for the function of penicillin-binding protein 1B (PBP1b). The sequence is that of Penicillin-binding protein activator LpoB from Cronobacter turicensis (strain DSM 18703 / CCUG 55852 / LMG 23827 / z3032).